Here is a 149-residue protein sequence, read N- to C-terminus: Protein Rv2250A (149 aa).

The sequence is that of Protein Rv2250A from Mycobacterium tuberculosis (strain ATCC 25618 / H37Rv).